A 257-amino-acid polypeptide reads, in one-letter code: Imidazole glycerol phosphate synthase subunit HisF (257 aa).

Residues Asp-11 and Asp-130 contribute to the active site.

This sequence belongs to the HisA/HisF family. As to quaternary structure, heterodimer of HisH and HisF.

The protein localises to the cytoplasm. The enzyme catalyses 5-[(5-phospho-1-deoxy-D-ribulos-1-ylimino)methylamino]-1-(5-phospho-beta-D-ribosyl)imidazole-4-carboxamide + L-glutamine = D-erythro-1-(imidazol-4-yl)glycerol 3-phosphate + 5-amino-1-(5-phospho-beta-D-ribosyl)imidazole-4-carboxamide + L-glutamate + H(+). Its pathway is amino-acid biosynthesis; L-histidine biosynthesis; L-histidine from 5-phospho-alpha-D-ribose 1-diphosphate: step 5/9. Functionally, IGPS catalyzes the conversion of PRFAR and glutamine to IGP, AICAR and glutamate. The HisF subunit catalyzes the cyclization activity that produces IGP and AICAR from PRFAR using the ammonia provided by the HisH subunit. The polypeptide is Imidazole glycerol phosphate synthase subunit HisF (Shewanella sediminis (strain HAW-EB3)).